Here is a 449-residue protein sequence, read N- to C-terminus: Wilms tumor protein (449 aa).

The disordered stretch occupies residues 48-84; the sequence is YGSLGGPAPPPAPPPPPPPPPHSFIKQEPSWGGAEPH. Over residues 54 to 69 the composition is skewed to pro residues; it reads PAPPPAPPPPPPPPPH. Glycyl lysine isopeptide (Lys-Gly) (interchain with G-Cter in SUMO) cross-links involve residues Lys-73 and Lys-177. Positions 236–244 match the 9aaTAD motif; the sequence is MTWNQMNLG. 3 C2H2-type zinc fingers span residues 323-347, 353-377, and 383-405; these read FMCA…SRKH, YQCD…QRRH, and FQCK…TRTH. Important for interaction with target DNA regions lie at residues 367–381 and 393–401; these read SDQL…TGVK and SRSDHLKTH. The KTS motif signature appears at 408 to 410; it reads KTS. Residues 414 to 438 form a C2H2-type 4 zinc finger; the sequence is FSCRWPSCQKKFARSDELVRHHNMH. Lys-444 is covalently cross-linked (Glycyl lysine isopeptide (Lys-Gly) (interchain with G-Cter in SUMO2)).

Belongs to the EGR C2H2-type zinc-finger protein family. As to quaternary structure, homodimer. Interacts with WTIP. Interacts with actively translating polysomes. Detected in nuclear ribonucleoprotein (mRNP) particles. Interacts with HNRNPU via the zinc-finger region. Interacts with U2AF2. Interacts with CITED2. Interacts with ZNF224 via the zinc-finger region. Interacts with WTAP and SRY. Interacts with AMER1. Interacts with RBM4. Expressed in the kidney and a subset of hematopoietic cells.

Its subcellular location is the nucleus. The protein resides in the nucleolus. It localises to the cytoplasm. The protein localises to the nucleus speckle. It is found in the nucleoplasm. In terms of biological role, transcription factor that plays an important role in cellular development and cell survival. Recognizes and binds to the DNA sequence 5'-GCG(T/G)GGGCG-3'. Regulates the expression of numerous target genes, including EPO. Plays an essential role for development of the urogenital system. It has a tumor suppressor as well as an oncogenic role in tumor formation. Function may be isoform-specific: isoforms lacking the KTS motif may act as transcription factors. Isoforms containing the KTS motif may bind mRNA and play a role in mRNA metabolism or splicing. Isoform 1 has lower affinity for DNA, and can bind RNA. The polypeptide is Wilms tumor protein (WT1) (Homo sapiens (Human)).